Consider the following 201-residue polypeptide: MDKFTTLTGIAAPLPLINVDTDMIIPKQFLKTIKRSGLGVNLFDEMRYDDDGNEIPDFVLNQDAYRKAEIIVAGDNFGCGSSREHAPWAIKDFGIRCVIAPSFADIFYNNCFKNGILPIALPQEQVDVLMKDAEKGANARMTVDLETQTVTTSDGEVFSFDLDPFKKRCLMEGLDDIGLTMEKISAIDSFEQSAAQARPWV.

This sequence belongs to the LeuD family. LeuD type 1 subfamily. In terms of assembly, heterodimer of LeuC and LeuD.

The enzyme catalyses (2R,3S)-3-isopropylmalate = (2S)-2-isopropylmalate. It participates in amino-acid biosynthesis; L-leucine biosynthesis; L-leucine from 3-methyl-2-oxobutanoate: step 2/4. In terms of biological role, catalyzes the isomerization between 2-isopropylmalate and 3-isopropylmalate, via the formation of 2-isopropylmaleate. This is 3-isopropylmalate dehydratase small subunit from Roseobacter denitrificans (strain ATCC 33942 / OCh 114) (Erythrobacter sp. (strain OCh 114)).